The sequence spans 405 residues: Exodeoxyribonuclease 7 large subunit (405 aa).

Belongs to the XseA family. In terms of assembly, heterooligomer composed of large and small subunits.

It is found in the cytoplasm. The enzyme catalyses Exonucleolytic cleavage in either 5'- to 3'- or 3'- to 5'-direction to yield nucleoside 5'-phosphates.. Bidirectionally degrades single-stranded DNA into large acid-insoluble oligonucleotides, which are then degraded further into small acid-soluble oligonucleotides. This chain is Exodeoxyribonuclease 7 large subunit, found in Syntrophomonas wolfei subsp. wolfei (strain DSM 2245B / Goettingen).